Consider the following 325-residue polypeptide: LIM and senescent cell antigen-like-containing domain protein 1 (325 aa).

Ala-2 carries the post-translational modification N-acetylalanine. LIM zinc-binding domains are found at residues 10–62 (CERC…CEHD), 71–121 (CHQC…CRPC), 135–184 (CQKC…CLPC), 193–243 (CGAC…CETH), and 252–303 (CFHC…CKKC).

As to quaternary structure, component of the heterotrimeric IPP (ILK-PINCH-PARVIN) complex composed of ILK, LIMS1/PINCH and PARVA; the complex binds to F-actin via the C-terminal tail of LIMS1 and the N-terminal region of PARVA, promoting F-actin filament bundling. Formation of the IPP complex is dependent on protein kinase C and precedes integrin-mediated cell adhesion and spreading. Competes with LIMS2 for interaction with ILK. Interacts (via LIM zinc-binding 5) with TGFB1I1. Interacts with SH3/SH2 adapter NCK2, thereby linking the complex to cell surface receptors. In terms of tissue distribution, expressed in most tissues except in the brain.

Its subcellular location is the cell junction. It is found in the focal adhesion. The protein localises to the cell membrane. Functionally, within the IPP (ILK-PINCH-PARVIN) complex, binds to F-actin, promoting F-actin bundling, a process required to generate force for actin cytoskeleton reorganization and subsequent dynamic cell adhesion events such as cell spreading and migration. The sequence is that of LIM and senescent cell antigen-like-containing domain protein 1 (LIMS1) from Homo sapiens (Human).